A 464-amino-acid polypeptide reads, in one-letter code: Glycine--tRNA ligase (464 aa).

Residues R104 and E175 each contribute to the substrate site. ATP contacts are provided by residues 207-209 (RNE), 217-222 (FRTREF), 292-293 (EL), and 336-339 (GVNR). 222 to 226 (FEQME) provides a ligand contact to substrate. Residue 332 to 336 (EPALG) participates in substrate binding.

The protein belongs to the class-II aminoacyl-tRNA synthetase family. Homodimer.

It localises to the cytoplasm. The catalysed reaction is tRNA(Gly) + glycine + ATP = glycyl-tRNA(Gly) + AMP + diphosphate. Catalyzes the attachment of glycine to tRNA(Gly). This is Glycine--tRNA ligase from Leptospira interrogans serogroup Icterohaemorrhagiae serovar copenhageni (strain Fiocruz L1-130).